The sequence spans 385 residues: Mannitol-1-phosphate 5-dehydrogenase (385 aa).

An NAD(+)-binding site is contributed by 3 to 14; it reads ALQFGAGNIGRG.

This sequence belongs to the mannitol dehydrogenase family.

The catalysed reaction is D-mannitol 1-phosphate + NAD(+) = beta-D-fructose 6-phosphate + NADH + H(+). The sequence is that of Mannitol-1-phosphate 5-dehydrogenase from Buchnera aphidicola subsp. Acyrthosiphon pisum (strain Tuc7).